A 368-amino-acid polypeptide reads, in one-letter code: Histidinol-phosphate aminotransferase (368 aa).

At Lys215 the chain carries N6-(pyridoxal phosphate)lysine.

Belongs to the class-II pyridoxal-phosphate-dependent aminotransferase family. Histidinol-phosphate aminotransferase subfamily. As to quaternary structure, homodimer. Pyridoxal 5'-phosphate is required as a cofactor.

It carries out the reaction L-histidinol phosphate + 2-oxoglutarate = 3-(imidazol-4-yl)-2-oxopropyl phosphate + L-glutamate. The protein operates within amino-acid biosynthesis; L-histidine biosynthesis; L-histidine from 5-phospho-alpha-D-ribose 1-diphosphate: step 7/9. The sequence is that of Histidinol-phosphate aminotransferase (hisC) from Buchnera aphidicola subsp. Acyrthosiphon pisum (strain APS) (Acyrthosiphon pisum symbiotic bacterium).